Consider the following 1382-residue polypeptide: DNA-directed RNA polymerase subunit beta (1382 aa).

It belongs to the RNA polymerase beta chain family. As to quaternary structure, the RNAP catalytic core consists of 2 alpha, 1 beta, 1 beta' and 1 omega subunit. When a sigma factor is associated with the core the holoenzyme is formed, which can initiate transcription.

It catalyses the reaction RNA(n) + a ribonucleoside 5'-triphosphate = RNA(n+1) + diphosphate. Functionally, DNA-dependent RNA polymerase catalyzes the transcription of DNA into RNA using the four ribonucleoside triphosphates as substrates. The chain is DNA-directed RNA polymerase subunit beta from Anaplasma marginale (strain Florida).